A 307-amino-acid polypeptide reads, in one-letter code: Zygote arrest protein 2.L (307 aa).

Residues 138 to 200 are disordered; sequence LPQGGRLPKK…EEPGNEEQTK (63 aa). The segment covering 156 to 186 has biased composition (basic and acidic residues); the sequence is LKERAPSPEDKEREKVSEKEPDTKDELEKRP. Residues 208-293 form a 3CxxC-type zinc finger; sequence QKYGYFHCKD…QELCGRCKNK (86 aa).

Belongs to the ZAR1 family. Expressed in oocytes.

Its subcellular location is the cytoplasm. The protein localises to the cytoplasmic ribonucleoprotein granule. In terms of biological role, mRNA-binding protein required for maternal mRNA storage, translation and degradation during oocyte maturation. Probably promotes formation of some phase-separated membraneless compartment that stores maternal mRNAs in oocytes: acts by undergoing liquid-liquid phase separation upon binding to maternal mRNAs. Binds to the 3'-UTR of maternal mRNAs, inhibiting their translation. The protein is Zygote arrest protein 2.L (zar2.L) of Xenopus laevis (African clawed frog).